The sequence spans 283 residues: ATP phosphoribosyltransferase (283 aa).

The protein belongs to the ATP phosphoribosyltransferase family. Long subfamily. It depends on Mg(2+) as a cofactor.

The protein localises to the cytoplasm. The catalysed reaction is 1-(5-phospho-beta-D-ribosyl)-ATP + diphosphate = 5-phospho-alpha-D-ribose 1-diphosphate + ATP. It participates in amino-acid biosynthesis; L-histidine biosynthesis; L-histidine from 5-phospho-alpha-D-ribose 1-diphosphate: step 1/9. Feedback inhibited by histidine. In terms of biological role, catalyzes the condensation of ATP and 5-phosphoribose 1-diphosphate to form N'-(5'-phosphoribosyl)-ATP (PR-ATP). Has a crucial role in the pathway because the rate of histidine biosynthesis seems to be controlled primarily by regulation of HisG enzymatic activity. The polypeptide is ATP phosphoribosyltransferase (Nocardia farcinica (strain IFM 10152)).